The chain runs to 339 residues: Ketol-acid reductoisomerase (NADP(+)) (339 aa).

The 182-residue stretch at 1 to 182 (MRVYYDRDAD…GGGRSGIIET (182 aa)) folds into the KARI N-terminal Rossmann domain. NADP(+) is bound by residues 24-27 (YGSQ), K48, S51, T53, and 83-86 (DELQ). Residue H108 is part of the active site. An NADP(+)-binding site is contributed by G134. In terms of domain architecture, KARI C-terminal knotted spans 183 to 328 (NFREECETDL…AKLRGMMPWI (146 aa)). 4 residues coordinate Mg(2+): D191, E195, E227, and E231. S252 provides a ligand contact to substrate.

The protein belongs to the ketol-acid reductoisomerase family. Mg(2+) serves as cofactor.

It catalyses the reaction (2R)-2,3-dihydroxy-3-methylbutanoate + NADP(+) = (2S)-2-acetolactate + NADPH + H(+). The enzyme catalyses (2R,3R)-2,3-dihydroxy-3-methylpentanoate + NADP(+) = (S)-2-ethyl-2-hydroxy-3-oxobutanoate + NADPH + H(+). The protein operates within amino-acid biosynthesis; L-isoleucine biosynthesis; L-isoleucine from 2-oxobutanoate: step 2/4. It functions in the pathway amino-acid biosynthesis; L-valine biosynthesis; L-valine from pyruvate: step 2/4. Involved in the biosynthesis of branched-chain amino acids (BCAA). Catalyzes an alkyl-migration followed by a ketol-acid reduction of (S)-2-acetolactate (S2AL) to yield (R)-2,3-dihydroxy-isovalerate. In the isomerase reaction, S2AL is rearranged via a Mg-dependent methyl migration to produce 3-hydroxy-3-methyl-2-ketobutyrate (HMKB). In the reductase reaction, this 2-ketoacid undergoes a metal-dependent reduction by NADPH to yield (R)-2,3-dihydroxy-isovalerate. This chain is Ketol-acid reductoisomerase (NADP(+)), found in Rhizobium etli (strain ATCC 51251 / DSM 11541 / JCM 21823 / NBRC 15573 / CFN 42).